Consider the following 336-residue polypeptide: Calcium-gated potassium channel MthK (336 aa).

Over 1–20 (MVLVIEIIRKHLPRVLKVPA) the chain is Cytoplasmic. Residues 21 to 41 (TRILLLVLAVIIYGTAGFHFI) traverse the membrane as a helical segment. Topologically, residues 42-48 (EGESWTV) are extracellular. The helical; Pore-forming intramembrane region spans 49–58 (SLYWTFVTIA). An intramembrane region (pore-forming) is located at residues 59 to 64 (TVGYGD). Residues 59–64 (TVGYGD) carry the Selectivity filter motif. The Extracellular segment spans residues 65–69 (YSPST). Residues 70-95 (PLGMYFTVTLIVLGIGTFAVAVERLL) form a helical membrane-spanning segment. The Cytoplasmic segment spans residues 96–106 (EFLINREQMKL). Positions 115-230 (SRHVVICGWS…RMAGADQVIS (116 aa)) constitute an RCK N-terminal domain. 3 residues coordinate Ca(2+): Asp-184, Glu-210, and Glu-212. Residues 252–336 (VQDVLAEEST…IERLKNYISA (85 aa)) form the RCK C-terminal domain.

In terms of assembly, homotetramer.

It localises to the cell membrane. Functionally, calcium-gated potassium channel. This Methanothermobacter thermautotrophicus (strain ATCC 29096 / DSM 1053 / JCM 10044 / NBRC 100330 / Delta H) (Methanobacterium thermoautotrophicum) protein is Calcium-gated potassium channel MthK (mthK).